Here is a 337-residue protein sequence, read N- to C-terminus: GTP 3',8-cyclase (337 aa).

One can recognise a Radical SAM core domain in the interval 1–226 (MNRVDYLRIS…REKIRQKWGL (226 aa)). GTP is bound at residue R8. C15 and C19 together coordinate [4Fe-4S] cluster. Y21 serves as a coordination point for S-adenosyl-L-methionine. C22 is a [4Fe-4S] cluster binding site. R60 serves as a coordination point for GTP. G64 lines the S-adenosyl-L-methionine pocket. Residue T91 participates in GTP binding. S115 lines the S-adenosyl-L-methionine pocket. K155 contacts GTP. M189 contacts S-adenosyl-L-methionine. Residues C260 and C263 each contribute to the [4Fe-4S] cluster site. Position 265 to 267 (265 to 267 (RMR)) interacts with GTP. C277 is a [4Fe-4S] cluster binding site.

This sequence belongs to the radical SAM superfamily. MoaA family. In terms of assembly, monomer and homodimer. It depends on [4Fe-4S] cluster as a cofactor.

The catalysed reaction is GTP + AH2 + S-adenosyl-L-methionine = (8S)-3',8-cyclo-7,8-dihydroguanosine 5'-triphosphate + 5'-deoxyadenosine + L-methionine + A + H(+). Its pathway is cofactor biosynthesis; molybdopterin biosynthesis. Functionally, catalyzes the cyclization of GTP to (8S)-3',8-cyclo-7,8-dihydroguanosine 5'-triphosphate. This is GTP 3',8-cyclase from Crocosphaera subtropica (strain ATCC 51142 / BH68) (Cyanothece sp. (strain ATCC 51142)).